Consider the following 321-residue polypeptide: Histidine N-alpha-methyltransferase (321 aa).

Tyr56 contributes to the L-histidine binding site. S-adenosyl-L-methionine is bound by residues Gly86, Lys92, Asp113, and 141 to 142; that span reads DF. Residues Asn166, Tyr206, and 282 to 284 contribute to the L-histidine site; that span reads EVS.

This sequence belongs to the methyltransferase superfamily. EgtD family. As to quaternary structure, monomer.

The catalysed reaction is L-histidine + 3 S-adenosyl-L-methionine = hercynine + 3 S-adenosyl-L-homocysteine + 3 H(+). It participates in amino-acid biosynthesis; ergothioneine biosynthesis. Catalyzes the SAM-dependent triple methylation of the alpha-amino group of histidine to form hercynine, a step in the biosynthesis pathway of ergothioneine. Among all the proteinogenic amino acids, only L-histidine is a substrate. The chain is Histidine N-alpha-methyltransferase from Mycolicibacterium smegmatis (strain ATCC 700084 / mc(2)155) (Mycobacterium smegmatis).